The following is a 72-amino-acid chain: MTLWVGILVGVVALLIGVALGFFIARKYMMSYLKKNPPINEQMLRMMMMQMGMKPSQKKINQMMKAMNNQAK.

Residues 4 to 24 (WVGILVGVVALLIGVALGFFI) form a helical membrane-spanning segment.

Belongs to the UPF0154 family.

The protein resides in the cell membrane. The sequence is that of UPF0154 protein RBAM_017710 from Bacillus velezensis (strain DSM 23117 / BGSC 10A6 / LMG 26770 / FZB42) (Bacillus amyloliquefaciens subsp. plantarum).